A 463-amino-acid chain; its full sequence is Nicotinate phosphoribosyltransferase pncB2 (463 aa).

H202 carries the phosphohistidine modification.

It belongs to the NAPRTase family. Post-translationally, transiently phosphorylated on a His residue during the reaction cycle. Phosphorylation strongly increases the affinity for substrates and increases the rate of nicotinate D-ribonucleotide production. Dephosphorylation regenerates the low-affinity form of the enzyme, leading to product release.

It carries out the reaction nicotinate + 5-phospho-alpha-D-ribose 1-diphosphate + ATP + H2O = nicotinate beta-D-ribonucleotide + ADP + phosphate + diphosphate. It functions in the pathway cofactor biosynthesis; NAD(+) biosynthesis; nicotinate D-ribonucleotide from nicotinate: step 1/1. Its function is as follows. Involved in the Preiss-Handler pathway, which is a recycling route that permits the salvage of free nicotinamide (NM) and nicotinic acid (Na) involved in the NAD biosynthesis. Catalyzes the synthesis of beta-nicotinate D-ribonucleotide from nicotinate and 5-phospho-D-ribose 1-phosphate at the expense of ATP. It is not able to use nicotinamide. PncB2 appears to be responsible for the increased salvage synthesis of NAD during infection of host tissues. The protein is Nicotinate phosphoribosyltransferase pncB2 (pncB2) of Mycobacterium tuberculosis (strain CDC 1551 / Oshkosh).